Consider the following 911-residue polypeptide: Translation initiation factor IF-2 (911 aa).

2 stretches are compositionally biased toward basic and acidic residues: residues 80–94 and 101–113; these read LEEQSRKTYEKEQQL and RPERAAAKPRTEV. 3 disordered regions span residues 80–142, 153–172, and 195–309; these read LEEQ…VSEP, VKSPVEETSETVAEKNDVEG, and SSLG…KMRK. Positions 214-256 are enriched in basic and acidic residues; sequence KEQADELKDEFDIKAKEGGKEREAGGESRKPVKKGSEETKKTT. Positions 262–272 are enriched in basic residues; sequence AKKKKGKKKKK. The segment covering 273–284 has biased composition (basic and acidic residues); the sequence is PEVDEKTIEKNI. Residues 286–300 are compositionally biased toward low complexity; that stretch reads STISGMDDTSGSGSS. Positions 408–578 constitute a tr-type G domain; the sequence is IRPPVVTIMG…LTEAEIRELK (171 aa). Residues 417-424 are G1; it reads GHVDHGKT. 417 to 424 lines the GTP pocket; the sequence is GHVDHGKT. The segment at 442–446 is G2; sequence GITQH. A G3 region spans residues 464–467; sequence DTPG. GTP is bound by residues 464–468 and 518–521; these read DTPGH and NKID. The interval 518–521 is G4; that stretch reads NKID. Residues 554–556 are G5; the sequence is SAK.

This sequence belongs to the TRAFAC class translation factor GTPase superfamily. Classic translation factor GTPase family. IF-2 subfamily.

The protein localises to the cytoplasm. Its function is as follows. One of the essential components for the initiation of protein synthesis. Protects formylmethionyl-tRNA from spontaneous hydrolysis and promotes its binding to the 30S ribosomal subunits. Also involved in the hydrolysis of GTP during the formation of the 70S ribosomal complex. The sequence is that of Translation initiation factor IF-2 from Chlorobium phaeobacteroides (strain BS1).